Reading from the N-terminus, the 775-residue chain is Meiotic driver SPOK2 (775 aa).

Positions 4-69 (KDRIAQLLRE…RCERERLQLE (66 aa)) form a coiled coil. Disordered stretches follow at residues 18–51 (KARE…REEE), 211–249 (QKDD…YICS), 442–525 (LSSA…AMAD), and 734–761 (PPPK…AQLF). Polar residues predominate over residues 444–457 (SAPSSQNTDISEYT).

It is found in the cytoplasm. Its subcellular location is the nucleus. Functionally, promotes unequal transmission of alleles from the parental zygote to progeny spores by acting as poison/antidote system, leading to poisoning of progeny that do not inherit the allele. May possess DNA nuclease activity that leads to spore killing, and a kinase activity that confers resistance to the nuclease activity. In Podospora anserina (strain S / ATCC MYA-4624 / DSM 980 / FGSC 10383) (Pleurage anserina), this protein is Meiotic driver SPOK2.